A 177-amino-acid chain; its full sequence is Large ribosomal subunit protein uL6 (177 aa).

A compositionally biased stretch (basic and acidic residues) spans 156 to 171 (PYKGKGVRYDTETIRR). The disordered stretch occupies residues 156–177 (PYKGKGVRYDTETIRRKEGKKK).

The protein belongs to the universal ribosomal protein uL6 family. Part of the 50S ribosomal subunit.

In terms of biological role, this protein binds to the 23S rRNA, and is important in its secondary structure. It is located near the subunit interface in the base of the L7/L12 stalk, and near the tRNA binding site of the peptidyltransferase center. In Gluconacetobacter diazotrophicus (strain ATCC 49037 / DSM 5601 / CCUG 37298 / CIP 103539 / LMG 7603 / PAl5), this protein is Large ribosomal subunit protein uL6.